A 358-amino-acid polypeptide reads, in one-letter code: Histidinol-phosphate aminotransferase (358 aa).

Lys218 bears the N6-(pyridoxal phosphate)lysine mark.

This sequence belongs to the class-II pyridoxal-phosphate-dependent aminotransferase family. Histidinol-phosphate aminotransferase subfamily. As to quaternary structure, homodimer. It depends on pyridoxal 5'-phosphate as a cofactor.

It carries out the reaction L-histidinol phosphate + 2-oxoglutarate = 3-(imidazol-4-yl)-2-oxopropyl phosphate + L-glutamate. It participates in amino-acid biosynthesis; L-histidine biosynthesis; L-histidine from 5-phospho-alpha-D-ribose 1-diphosphate: step 7/9. This is Histidinol-phosphate aminotransferase from Dehalococcoides mccartyi (strain ATCC BAA-2100 / JCM 16839 / KCTC 5957 / BAV1).